The following is a 1188-amino-acid chain: Meiotically up-regulated gene 190 protein (1188 aa).

Positions 1-11 (MSTHSGDSTKQ) are enriched in polar residues. Disordered stretches follow at residues 1-61 (MSTH…DPIT) and 83-125 (FTVP…EADN). Residues 41 to 61 (EKKEEQQREQTENEKLFDPIT) are compositionally biased toward basic and acidic residues. Over residues 84–112 (TVPNQSIQGSSLPSEKPYLSSNQPTNVYK) the composition is skewed to polar residues. Residues 173–193 (LVISWFFTHSIIISAVLPLAI) traverse the membrane as a helical segment. The SMP-LTD domain occupies 228–453 (IPESAEWMNH…SPKSMTIDLS (226 aa)). The interval 298–318 (ASESFSEKQASEAEHKDEPEQ) is disordered. Residues 302-318 (FSEKQASEAEHKDEPEQ) show a composition bias toward basic and acidic residues. C2 domains lie at 451-576 (DLSK…ERCD) and 636-781 (KEEE…TKWY). Residues Asp485, Asp491, Asp544, Asp546, Ser549, and Asp552 each coordinate Ca(2+). Disordered stretches follow at residues 615–639 (TIPR…KEEE) and 1002–1066 (QRAS…GTMN). Residue Ser1005 is modified to Phosphoserine. Acidic residues predominate over residues 1022–1032 (DDSVDTEDEET).

It depends on Ca(2+) as a cofactor.

It is found in the cytoplasm. It localises to the endoplasmic reticulum membrane. The protein resides in the nucleus membrane. Its subcellular location is the cytoskeleton. The protein localises to the microtubule organizing center. It is found in the spindle pole body. In terms of biological role, has a role in meiosis. This chain is Meiotically up-regulated gene 190 protein (mug190), found in Schizosaccharomyces pombe (strain 972 / ATCC 24843) (Fission yeast).